Consider the following 198-residue polypeptide: Small ribosomal subunit protein eS1 (198 aa).

The protein belongs to the eukaryotic ribosomal protein eS1 family.

This is Small ribosomal subunit protein eS1 from Nanoarchaeum equitans (strain Kin4-M).